A 156-amino-acid chain; its full sequence is Small ribosomal subunit protein uS7 (156 aa).

The protein belongs to the universal ribosomal protein uS7 family. As to quaternary structure, part of the 30S ribosomal subunit. Contacts proteins S9 and S11.

Functionally, one of the primary rRNA binding proteins, it binds directly to 16S rRNA where it nucleates assembly of the head domain of the 30S subunit. Is located at the subunit interface close to the decoding center, probably blocks exit of the E-site tRNA. This Clostridioides difficile (strain 630) (Peptoclostridium difficile) protein is Small ribosomal subunit protein uS7.